The following is a 140-amino-acid chain: Actin-depolymerizing factor 10 (140 aa).

Position 6 is a phosphoserine (serine 6). Positions 7 to 139 constitute an ADF-H domain; that stretch reads GMHVSDECKL…SLDIIKGRVN (133 aa).

This sequence belongs to the actin-binding proteins ADF family.

The protein localises to the cytoplasm. It localises to the cytoskeleton. Actin-depolymerizing protein. Severs actin filaments (F-actin) and binds to actin monomers. This is Actin-depolymerizing factor 10 (ADF10) from Arabidopsis thaliana (Mouse-ear cress).